The sequence spans 359 residues: Trans-enoyl reductase mpsG (359 aa).

Residues Tyr-212, Leu-259, and Thr-278 each contribute to the NADP(+) site.

The protein belongs to the zinc-containing alcohol dehydrogenase family. In terms of assembly, monomer.

It functions in the pathway secondary metabolite biosynthesis. Its function is as follows. Trans-enoyl reductase; part of the gene cluster that mediates the biosynthesis of macrophasetins, 3-decalinoyltetramic acids (DTAs) which feature a tetramate (pyrrolidine-2,4-dione) unit connected to a decalin fragment and that have potent bioactivities. The PKS-NRPS mpsA together with its associated enoylreductase partner mpsG incorporate one unit of acetyl-CoA, seven units of malonyl-CoA, and one unit of L-alanine to assemble the linear tetramic acid intermediate corresponding to the backbone of macrophasetins. Without the Diels-Alderase mpsD, the mpsA/G product can undergo the non-enzymatic intramolecular Diels-Alder (IMDA) reaction to generate both macrophasetin A and macrophasetin B. Catalyzed by mpsD, the linear tetramic acid intermediate is thoroughly converted to macrophasetin A via the endo-IMDA reaction in a regioselective and stereoselective manner. Finally, the cytochrome P450 monooxygenase mpsF catalyzes the hydroxylation at C20 to yield the end product macrophasetin C. The protein is Trans-enoyl reductase mpsG of Macrophomina phaseolina (strain MS6) (Charcoal rot fungus).